We begin with the raw amino-acid sequence, 241 residues long: Uridylate kinase (241 aa).

15-18 (KLSG) contributes to the ATP binding site. Positions 23–28 (GAEGFG) are involved in allosteric activation by GTP. A UMP-binding site is contributed by Gly57. Residues Gly58 and Arg62 each coordinate ATP. Residues Asp77 and 138–145 (TGNPFFTT) each bind UMP. Thr165, Tyr171, and Asp174 together coordinate ATP.

The protein belongs to the UMP kinase family. Homohexamer.

Its subcellular location is the cytoplasm. The catalysed reaction is UMP + ATP = UDP + ADP. It functions in the pathway pyrimidine metabolism; CTP biosynthesis via de novo pathway; UDP from UMP (UMPK route): step 1/1. With respect to regulation, allosterically activated by GTP. Inhibited by UTP. In terms of biological role, catalyzes the reversible phosphorylation of UMP to UDP. This is Uridylate kinase from Yersinia pseudotuberculosis serotype O:1b (strain IP 31758).